A 248-amino-acid chain; its full sequence is Ribonuclease PH (248 aa).

Residues Arg93 and 131–133 each bind phosphate; that span reads GTR.

It belongs to the RNase PH family. Homohexameric ring arranged as a trimer of dimers.

It catalyses the reaction tRNA(n+1) + phosphate = tRNA(n) + a ribonucleoside 5'-diphosphate. Phosphorolytic 3'-5' exoribonuclease that plays an important role in tRNA 3'-end maturation. Removes nucleotide residues following the 3'-CCA terminus of tRNAs; can also add nucleotides to the ends of RNA molecules by using nucleoside diphosphates as substrates, but this may not be physiologically important. Probably plays a role in initiation of 16S rRNA degradation (leading to ribosome degradation) during starvation. This Bifidobacterium longum (strain NCC 2705) protein is Ribonuclease PH.